Reading from the N-terminus, the 587-residue chain is General negative regulator of transcription subunit 4 (587 aa).

Residues 33–78 (CPLCIEPMDITDKNFFPCPCGYQICQFCYNNIRQNPELNGRCPACR) form an RING-type zinc finger. The stretch at 94–128 (EELKMERAKLARKEKERKHREKERKENEYTNRKHL) forms a coiled coil. The RRM domain maps to 137-228 (NLVYVVGINP…YMDGRLIKAA (92 aa)). A C3H1-type zinc finger spans residues 229-256 (YGTTKYCSSYLRGLPCPNPNCMFLHEPG). Residue Lys-270 forms a Glycyl lysine isopeptide (Lys-Gly) (interchain with G-Cter in ubiquitin) linkage. The residue at position 310 (Thr-310) is a Phosphothreonine. Ser-312 bears the Phosphoserine mark. Residue Thr-326 is modified to Phosphothreonine. Phosphoserine is present on Ser-360. Positions 370-412 (TLNDSLGHHTTPTTENTITSTTTTTNTNATSHSHGSKKKQSLA) are disordered. Low complexity predominate over residues 377 to 402 (HHTTPTTENTITSTTTTTNTNATSHS).

In terms of assembly, forms a NOT protein complex that comprises NOT1, NOT2, NOT3, NOT4 and NOT5. Subunit of the 1.0 MDa CCR4-NOT core complex that contains CCR4, CAF1, NOT1, NOT2, NOT3, NOT4, NOT5, CAF40 and CAF130. In the complex interacts with NOT1. The core complex probably is part of a less characterized 1.9 MDa CCR4-NOT complex.

The protein resides in the cytoplasm. It is found in the nucleus. It catalyses the reaction S-ubiquitinyl-[E2 ubiquitin-conjugating enzyme]-L-cysteine + [acceptor protein]-L-lysine = [E2 ubiquitin-conjugating enzyme]-L-cysteine + N(6)-ubiquitinyl-[acceptor protein]-L-lysine.. The protein operates within protein modification; protein ubiquitination. In terms of biological role, E3 ubiquitin-protein ligase component of the CCR4-NOT core complex, which in the nucleus seems to be a general transcription factor, and in the cytoplasm the major mRNA deadenylase involved in mRNA turnover. The NOT protein subcomplex negatively regulates the basal and activated transcription of many genes. Preferentially affects TC-type TATA element-dependent transcription. Could directly or indirectly inhibit component(s) of the general transcription machinery. In the cytoplasm, catalyzes monoubiquitination of RPS7/es7 in response to stalled ribosomes, initiating a HEL2-dependent response that activates the No-Go Decay (NGD) pathway. In Saccharomyces cerevisiae (strain ATCC 204508 / S288c) (Baker's yeast), this protein is General negative regulator of transcription subunit 4 (MOT2).